A 273-amino-acid polypeptide reads, in one-letter code: Type II pantothenate kinase (273 aa).

8–15 (DAGGTLTK) is a binding site for ATP. The Proton acceptor role is filled by Glu-76. ATP contacts are provided by residues Thr-105, 127-131 (GGTIM), Phe-143, and Ser-230.

This sequence belongs to the type II pantothenate kinase family. As to quaternary structure, homodimer.

The protein resides in the cytoplasm. The catalysed reaction is (R)-pantothenate + ATP = (R)-4'-phosphopantothenate + ADP + H(+). It participates in cofactor biosynthesis; coenzyme A biosynthesis; CoA from (R)-pantothenate: step 1/5. Its function is as follows. Catalyzes the phosphorylation of pantothenate (Pan), the first step in CoA biosynthesis. This is Type II pantothenate kinase from Bacillus cereus (strain ATCC 14579 / DSM 31 / CCUG 7414 / JCM 2152 / NBRC 15305 / NCIMB 9373 / NCTC 2599 / NRRL B-3711).